A 590-amino-acid chain; its full sequence is Muscarinic acetylcholine receptor M3 (590 aa).

Residues 1-67 (MTLHNNSTTS…DPLGGHTVWQ (67 aa)) lie on the Extracellular side of the membrane. 5 N-linked (GlcNAc...) asparagine glycosylation sites follow: Asn5, Asn6, Asn15, Asn41, and Asn48. Residues 68–91 (VVFIAFLTGILALVTIIGNILVIV) traverse the membrane as a helical segment. The Cytoplasmic segment spans residues 92-104 (SFKVNKQLKTVNN). Residues 105–130 (YFLLSLACADLIIGVISMNLFTTYII) form a helical membrane-spanning segment. At 131-142 (MNRWALGNLACD) the chain is on the extracellular side. A disulfide bridge connects residues Cys141 and Cys221. Residues 143 to 164 (LWLAIDYVASNASVMNLLVISF) traverse the membrane as a helical segment. At 165–184 (DRYFSITRPLTYRAKRTTKR) the chain is on the cytoplasmic side. Residues 185-206 (AGVMIGLAWVISFVLWAPAILF) form a helical membrane-spanning segment. The Extracellular portion of the chain corresponds to 207-229 (WQYFVGKRTVPPGECFIQFLSEP). A helical transmembrane segment spans residues 230-252 (TITFGTAIAAFYMPVTIMTILYW). At 253-491 (RIYKETEKRT…SLVKEKKAAQ (239 aa)) the chain is on the cytoplasmic side. The Basolateral sorting signal signature appears at 275–281 (AETENFV). The disordered stretch occupies residues 323–357 (SSEQMDQDHSSSDSWNNNDAAASLENSASSDEEDI). The span at 334–345 (SDSWNNNDAAAS) shows a compositional bias: low complexity. At Ser385 the chain carries Phosphoserine. A helical membrane pass occupies residues 492–514 (TLSAILLAFIITWTPYNIMVLVN). Residues 515–526 (TFCDSCIPKTFW) lie on the Extracellular side of the membrane. The cysteines at positions 517 and 520 are disulfide-linked. A helical membrane pass occupies residues 527–546 (NLGYWLCYINSTVNPVCYAL). At 547-590 (CNKTFRTTFKMLLLCQCGKKKRRKQQYQQRQSVIFHKRAPEQAL) the chain is on the cytoplasmic side.

Belongs to the G-protein coupled receptor 1 family. Muscarinic acetylcholine receptor subfamily. CHRM3 sub-subfamily. Homodimer; the dimers can form tetramers. Interacts with NALCN. Interacts with TMEM147.

It is found in the cell membrane. It localises to the postsynaptic cell membrane. The protein localises to the basolateral cell membrane. Its subcellular location is the endoplasmic reticulum membrane. The muscarinic acetylcholine receptor mediates various cellular responses, including inhibition of adenylate cyclase, breakdown of phosphoinositides and modulation of potassium channels through the action of G proteins. Primary transducing effect is Pi turnover. The polypeptide is Muscarinic acetylcholine receptor M3 (CHRM3) (Gorilla gorilla gorilla (Western lowland gorilla)).